The chain runs to 825 residues: ATP-dependent RNA helicase DBP4 (825 aa).

Residues 1 to 34 (MAAGNAKGGFAHRNKSVPKKTDAKSLKRKRGQED) are disordered. The span at 19–34 (KKTDAKSLKRKRGQED) shows a compositional bias: basic and acidic residues. The Q motif signature appears at 53 to 81 (KQFTDLPLCEATASGLRASHFEVLTDVQR). The 175-residue stretch at 84–258 (IPLALKGRDI…RLSLKEPEYV (175 aa)) folds into the Helicase ATP-binding domain. 97–104 (AKTGSGKT) is a binding site for ATP. The short motif at 206–209 (DEAD) is the DEAD box element. Residues 284 to 439 (KLDTLFGFLR…NKKKSIKNEL (156 aa)) enclose the Helicase C-terminal domain. Disordered stretches follow at residues 508-536 (NASRAAISSGSESDSDDEGKPKKDKKQVR) and 676-825 (AESE…LLED). Composition is skewed to basic and acidic residues over residues 677–691 (ESEKVKEADVDDKQA) and 700–714 (RERQKARERGEELER). Acidic residues-rich tracts occupy residues 730–739 (GEGDEGDEDP), 761–770 (GEDEGDDGEV), and 805–816 (MAEEPENLEDLE).

Belongs to the DEAD box helicase family. DDX10/DBP4 subfamily. In terms of assembly, interacts with the U3 and U14 snoRNAs. Associates with pre-ribosomal complexes.

The protein localises to the nucleus. It is found in the nucleolus. The enzyme catalyses ATP + H2O = ADP + phosphate + H(+). In terms of biological role, ATP-dependent RNA helicase required for ribosome biogenesis. Involved in the release of U14 snoRNA in pre-ribosomal complexes. Required for pre-rRNA cleavage at site A2. This is ATP-dependent RNA helicase DBP4 (DBP4) from Chaetomium globosum (strain ATCC 6205 / CBS 148.51 / DSM 1962 / NBRC 6347 / NRRL 1970) (Soil fungus).